Reading from the N-terminus, the 685-residue chain is Stromal interaction molecule 1 (685 aa).

Residues 1–22 form the signal peptide; the sequence is MDVCARLALWLLWGLLLHQGQS. Over 23-213 the chain is Extracellular; sequence LSHSHSEKNT…LLTRHNHLKD (191 aa). The segment at 24-43 is disordered; sequence SHSHSEKNTGASSGATSEES. A compositionally biased stretch (low complexity) spans 32–41; it reads TGASSGATSE. 2 EF-hand domains span residues 64–97 and 102–126; these read SFEA…EDLN and TVKH…AWKA. Residues D76, D78, N80, D82, and E87 each coordinate Ca(2+). Residues N131 and N171 are each glycosylated (N-linked (GlcNAc...) asparagine). The 69-residue stretch at 132–200 folds into the SAM domain; that stretch reads WTVDEVIQWL…QLKALDTVLF (69 aa). A helical membrane pass occupies residues 214-234; sequence FMLVVSIVIGVGGCWFAYIQN. Residues 235-685 lie on the Cytoplasmic side of the membrane; that stretch reads RYSKEHMKKM…LKIFKKPLKK (451 aa). Positions 248–442 form a coiled coil; it reads LEGLHRAEQS…IEILCGFQIV (195 aa). Residue S257 is modified to Phosphoserine. Positions 344-442 are SOAR/CAD; the sequence is PEALQKWLQL…IEILCGFQIV (99 aa). The tract at residues 475 to 483 is contributes to fast Ca(2+)-dependent inactivation of CRAC channels; that stretch reads DDVDDMDEE. Residues 490–499 show a composition bias toward low complexity; it reads MQSPSLQSSV. Positions 490–542 are disordered; the sequence is MQSPSLQSSVRQRLTEPQHGLGSQRDLTHSDSESSLHTSDRQRVAPKPPQMGR. Phosphothreonine is present on T504. S512 carries the phosphoserine modification. Residues 515–532 are compositionally biased toward basic and acidic residues; that stretch reads DLTHSDSESSLHTSDRQR. Phosphothreonine is present on T517. Phosphoserine is present on residues S519, S521, S523, S524, S567, S575, S602, S608, S618, S621, and S628. Residues 596-685 form a disordered region; sequence LMELNPSVPP…LKIFKKPLKK (90 aa). The span at 608-620 shows a compositional bias: low complexity; sequence SPLLDSSHSHSPS. Positions 642-645 match the Microtubule tip localization signal motif; that stretch reads TRIP. Positions 655 to 666 are enriched in acidic residues; the sequence is EEDNGSIGEETD. Phosphoserine is present on S660. Position 665 is a phosphothreonine (T665). S668 is modified (phosphoserine). The segment covering 670-685 has biased composition (basic residues); the sequence is GRKKFPLKIFKKPLKK. Positions 672 to 685 are required for generation of inwardly rectifying CRAC currents; that stretch reads KKFPLKIFKKPLKK.

As to quaternary structure, monomer in the presence of Ca(2+). It oligomerizes in absence of Ca(2+). Forms homooligomers and heterooligomers with STIM2. Interacts with pore-forming subunits of CRAC channels, ORAI1, ORAI2 and ORAI3; this interaction is potentiated upon Ca(2+) store depletion. Interacts (via the transmembrane region and the SOAR/CAD domain) with SPPL3; the interaction promotes the binding of STIM1 to ORAI1. Interacts with ORAI1. Interacts with MAPRE1; probably required for targeting to the growing microtubule plus ends. Interacts with CRACR2A/EFCAB4B; the interaction is direct and takes place in absence of Ca(2+). Forms a complex with CRACR2A/EFCAB4B and ORAI1 at low concentration of Ca(2+), the complex dissociates at elevated Ca(2+) concentrations. Interacts with SARAF, promoting a slow inactivation of STIM1-dependent SOCE activity, possibly by facilitating the deoligomerization of STIM1. Interacts with EFHB; the interaction takes place upon Ca(2+)-store depletion and inhibits the association with SARAF. Interacts with ASPH. Interacts with SLC35G1; intracellular Ca(2+)-dependent. May interact with ATP1A1, ATP2A2, ATP2B1, ATP2B4, KPNB1 and XPO1; through SLC35G1. Interacts with TMEM203. Interacts with STIMATE, promoting STIM1 conformational switch. Interacts with TMEM178A. Interacts with CASQ1 (via C-terminal end and preferentially with the monomeric form); this interaction increases in response to a depletion of intracellular Ca(2+), decreases both STIM1 aggregation and clustering, interaction of STIM1 with ORAI1 and store-operated Ca(2+) entry (SOCE) activity. Interacts with ADCY8. In terms of processing, glycosylation is required for cell surface expression. Post-translationally, phosphorylated predominantly on Ser residues.

It is found in the cell membrane. It localises to the endoplasmic reticulum membrane. The protein resides in the sarcoplasmic reticulum. Its subcellular location is the cytoplasm. The protein localises to the cytoskeleton. Acts as a Ca(2+) sensor that gates two major inward rectifying Ca(2+) channels at the plasma membrane: Ca(2+) release-activated Ca(2+) (CRAC) channels and arachidonate-regulated Ca(2+)-selective (ARC) channels. Plays a role in mediating store-operated Ca(2+) entry (SOCE), a Ca(2+) influx following depletion of intracellular Ca(2+) stores. Upon Ca(2+) depletion, translocates from the endoplasmic reticulum to the plasma membrane where it activates CRAC channel pore-forming subunits ORA1, ORA2 and ORAI3 to generate sustained and oscillatory Ca(2+) entry. Involved in enamel formation. The polypeptide is Stromal interaction molecule 1 (Rattus norvegicus (Rat)).